The chain runs to 471 residues: Venom prothrombin activator vestarin-D2 (471 aa).

The signal sequence occupies residues 1–20 (MAPQLLLCLILTFLWSLPEA). Positions 21–40 (ESNVFLKSNVANRFLQRTKR) are excised as a propeptide. A Gla domain is found at 41–86 (ANSIFEEIRPGNIERECVEEKCSKEEAREVFQDNEKTEAFWTVYVD). A 4-carboxyglutamate mark is found at Glu46, Glu47, Glu54, Glu56, Glu59, Glu60, Glu65, Glu66, Glu69, and Glu75. Cys57 and Cys62 are disulfide-bonded. Residues 86 to 122 (DGDQCLSNPCHYRGTCKDGIGSYTCTCLPGYEGKNCE) form the EGF-like 1; calcium-binding domain. 10 cysteine pairs are disulfide-bonded: Cys90–Cys101, Cys95–Cys110, Cys112–Cys121, Cys129–Cys140, Cys136–Cys149, Cys151–Cys164, Cys172–Cys333, Cys233–Cys238, Cys381–Cys395, and Cys406–Cys434. A glycan (O-linked (Hex...) serine) is linked at Ser92. One can recognise an EGF-like 2 domain in the interval 129–164 (CRLFNGNCWHFCKTVQNDTQCSCAEGYRLGVDGFSC). The propeptide at 182 to 226 (REASLPDFHFSDDYDAIDENNLVETVQSQSATLLKKSDNPSPDIR) is activation peptide. Residues 227 to 458 (IVSGLDCKLG…FIPWIKTIMR (232 aa)) enclose the Peptidase S1 domain. The Charge relay system role is filled by His268. N-linked (GlcNAc...) asparagine glycosylation occurs at Asn271. Asp313 functions as the Charge relay system in the catalytic mechanism. Ser410 serves as the catalytic Charge relay system.

The protein belongs to the peptidase S1 family. Snake venom subfamily. As to quaternary structure, heterodimer of a light chain and a heavy chain; disulfide-linked. Post-translationally, the vitamin K-dependent, enzymatic carboxylation of some glutamate residues allows the modified protein to bind calcium. In terms of tissue distribution, expressed by the venom gland.

It is found in the secreted. The enzyme catalyses Selective cleavage of Arg-|-Thr and then Arg-|-Ile bonds in prothrombin to form thrombin.. Its function is as follows. Snake prothrombin activator that attacks the hemostatic system of prey. This protein is functionally similar to blood coagulation factor Xa. The polypeptide is Venom prothrombin activator vestarin-D2 (Demansia vestigiata (Lesser black whip snake)).